The sequence spans 211 residues: FMN-dependent NADH:quinone oxidoreductase 3 (211 aa).

17 to 19 provides a ligand contact to FMN; it reads SFS.

The protein belongs to the azoreductase type 1 family. Homodimer. It depends on FMN as a cofactor.

The enzyme catalyses 2 a quinone + NADH + H(+) = 2 a 1,4-benzosemiquinone + NAD(+). It carries out the reaction N,N-dimethyl-1,4-phenylenediamine + anthranilate + 2 NAD(+) = 2-(4-dimethylaminophenyl)diazenylbenzoate + 2 NADH + 2 H(+). In terms of biological role, quinone reductase that provides resistance to thiol-specific stress caused by electrophilic quinones. Functionally, also exhibits azoreductase activity. Catalyzes the reductive cleavage of the azo bond in aromatic azo compounds to the corresponding amines. This is FMN-dependent NADH:quinone oxidoreductase 3 from Halalkalibacterium halodurans (strain ATCC BAA-125 / DSM 18197 / FERM 7344 / JCM 9153 / C-125) (Bacillus halodurans).